Consider the following 479-residue polypeptide: 3-phytase B (479 aa).

The N-terminal stretch at 1–19 is a signal peptide; the sequence is MPRTSLLTLACALATGASA. Cystine bridges form between cysteine 71–cysteine 387, cysteine 128–cysteine 472, cysteine 216–cysteine 441, cysteine 225–cysteine 298, and cysteine 413–cysteine 421. Histidine 82 (nucleophile) is an active-site residue. A glycan (N-linked (GlcNAc...) asparagine) is linked at asparagine 191. N-linked (GlcNAc...) asparagine glycosylation occurs at asparagine 315. Aspartate 338 acts as the Proton donor in catalysis. The N-linked (GlcNAc...) asparagine glycan is linked to asparagine 458.

It belongs to the histidine acid phosphatase family. In terms of assembly, homodimer.

The enzyme catalyses 1D-myo-inositol hexakisphosphate + H2O = 1D-myo-inositol 1,2,4,5,6-pentakisphosphate + phosphate. Catalyzes the hydrolysis of inorganic orthophosphate from phytate. This Aspergillus awamori (Black koji mold) protein is 3-phytase B (phyB).